Reading from the N-terminus, the 603-residue chain is Ankyrin repeat and LEM domain-containing protein 2 homolog (603 aa).

The chain crosses the membrane as a helical; Signal-anchor for type III membrane protein span at residues 2 to 22; the sequence is GRKSAILAVILAIIYFRSNFS. ANK repeat units lie at residues 161–190 and 221–250; these read FRYN…NIDF and NSDT…TDRT. Disordered regions lie at residues 446–465 and 505–538; these read ISEN…DDDD and LPPP…PPPT. The segment covering 456–465 has biased composition (acidic residues); the sequence is DSADDEDDDD.

Belongs to the ANKLE2 family. As to quaternary structure, interacts with baf-1. Interacts with protein phosphatase 2A (PP2A) components.

It is found in the nucleus membrane. Involved in mitotic nuclear envelope reassembly by promoting dephosphorylation of baf-1 during mitotic exit. Coordinates the control of baf-1 dephosphorylation by inhibiting VRK1 kinase and promoting dephosphorylation of baf-1 by protein phosphatase 2A (PP2A), thereby facilitating nuclear envelope assembly. It is unclear whether it acts as a real PP2A regulatory subunit or whether it is involved in recruitment of the PP2A complex. The polypeptide is Ankyrin repeat and LEM domain-containing protein 2 homolog (lem-4) (Caenorhabditis elegans).